A 388-amino-acid polypeptide reads, in one-letter code: Palmitoyltransferase ZDHHC18 (388 aa).

Residues M1 to R67 are disordered. The Cytoplasmic segment spans residues M1–H90. The segment covering S10–P27 has biased composition (low complexity). Phosphoserine is present on S19. The segment covering A28–P46 has biased composition (pro residues). The chain crosses the membrane as a helical span at residues G91 to F111. At D112–K119 the chain is on the lumenal side. Residues L120–L140 form a helical membrane-spanning segment. Topologically, residues Q141 to R235 are cytoplasmic. In terms of domain architecture, DHHC spans K192 to L242. C222 (S-palmitoyl cysteine intermediate) is an active-site residue. A helical membrane pass occupies residues F236–V256. The Lumenal segment spans residues T257–A277. Residues S278–F298 traverse the membrane as a helical segment. The Cytoplasmic segment spans residues H299–P388. The tract at residues L364–P388 is disordered. The span at R369–P379 shows a compositional bias: basic and acidic residues.

The protein belongs to the DHHC palmitoyltransferase family. ERF2/ZDHHC9 subfamily. Widely expressed.

The protein localises to the golgi apparatus membrane. It catalyses the reaction L-cysteinyl-[protein] + hexadecanoyl-CoA = S-hexadecanoyl-L-cysteinyl-[protein] + CoA. In terms of biological role, palmitoyltransferase that catalyzes the addition of palmitate onto various protein substrates, such as CGAS, HRAS and LCK. Acts as a negative regulator of the cGAS-STING pathway be mediating palmitoylation and inactivation of CGAS. May also have a palmitoyltransferase activity toward the beta-2 adrenergic receptor/ADRB2 and therefore regulate G protein-coupled receptor signaling. The protein is Palmitoyltransferase ZDHHC18 of Homo sapiens (Human).